We begin with the raw amino-acid sequence, 93 residues long: Aspartyl/glutamyl-tRNA(Asn/Gln) amidotransferase subunit C (93 aa).

Belongs to the GatC family. As to quaternary structure, heterotrimer of A, B and C subunits.

It carries out the reaction L-glutamyl-tRNA(Gln) + L-glutamine + ATP + H2O = L-glutaminyl-tRNA(Gln) + L-glutamate + ADP + phosphate + H(+). It catalyses the reaction L-aspartyl-tRNA(Asn) + L-glutamine + ATP + H2O = L-asparaginyl-tRNA(Asn) + L-glutamate + ADP + phosphate + 2 H(+). In terms of biological role, allows the formation of correctly charged Asn-tRNA(Asn) or Gln-tRNA(Gln) through the transamidation of misacylated Asp-tRNA(Asn) or Glu-tRNA(Gln) in organisms which lack either or both of asparaginyl-tRNA or glutaminyl-tRNA synthetases. The reaction takes place in the presence of glutamine and ATP through an activated phospho-Asp-tRNA(Asn) or phospho-Glu-tRNA(Gln). This Rubrobacter xylanophilus (strain DSM 9941 / JCM 11954 / NBRC 16129 / PRD-1) protein is Aspartyl/glutamyl-tRNA(Asn/Gln) amidotransferase subunit C.